Reading from the N-terminus, the 296-residue chain is GTPase Era (296 aa).

Residues 3 to 170 (KSGFITIVGR…LELMVKYLPE (168 aa)) enclose the Era-type G domain. Residues 11-18 (GRPNVGKS) form a G1 region. 11–18 (GRPNVGKS) serves as a coordination point for GTP. A G2 region spans residues 37–41 (QTTRN). Positions 58-61 (DTPG) are G3. GTP contacts are provided by residues 58-62 (DTPGI) and 120-123 (NKVD). Positions 120-123 (NKVD) are G4. Residues 149–151 (ISA) form a G5 region. A KH type-2 domain is found at 201 to 278 (LSQEVPHGIA…NIKIWVKVRK (78 aa)).

Belongs to the TRAFAC class TrmE-Era-EngA-EngB-Septin-like GTPase superfamily. Era GTPase family. Monomer.

It localises to the cytoplasm. It is found in the cell membrane. Its function is as follows. An essential GTPase that binds both GDP and GTP, with rapid nucleotide exchange. Plays a role in 16S rRNA processing and 30S ribosomal subunit biogenesis and possibly also in cell cycle regulation and energy metabolism. The protein is GTPase Era of Clostridium perfringens (strain ATCC 13124 / DSM 756 / JCM 1290 / NCIMB 6125 / NCTC 8237 / Type A).